A 121-amino-acid polypeptide reads, in one-letter code: MTDKPAVIRKRADFLAANRGLRVARPGFVLLAHPNQGQGQRYGITVTKKIGNAVVRNRMKRRFRELLWELLPQQGLADHDHILIGREGGIERDFGKLREELMLALRRAREGKGDPRRRRRR.

This sequence belongs to the RnpA family. Consists of a catalytic RNA component (M1 or rnpB) and a protein subunit.

It carries out the reaction Endonucleolytic cleavage of RNA, removing 5'-extranucleotides from tRNA precursor.. Its function is as follows. RNaseP catalyzes the removal of the 5'-leader sequence from pre-tRNA to produce the mature 5'-terminus. It can also cleave other RNA substrates such as 4.5S RNA. The protein component plays an auxiliary but essential role in vivo by binding to the 5'-leader sequence and broadening the substrate specificity of the ribozyme. In Erythrobacter litoralis (strain HTCC2594), this protein is Ribonuclease P protein component.